An 828-amino-acid chain; its full sequence is Glycerol-3-phosphate acyltransferase (828 aa).

Positions 310-315 match the HXXXXD motif motif; sequence HRSHID.

Belongs to the GPAT/DAPAT family.

Its subcellular location is the cell inner membrane. It catalyses the reaction sn-glycerol 3-phosphate + an acyl-CoA = a 1-acyl-sn-glycero-3-phosphate + CoA. The protein operates within phospholipid metabolism; CDP-diacylglycerol biosynthesis; CDP-diacylglycerol from sn-glycerol 3-phosphate: step 1/3. The sequence is that of Glycerol-3-phosphate acyltransferase from Pseudomonas putida (strain ATCC 47054 / DSM 6125 / CFBP 8728 / NCIMB 11950 / KT2440).